Reading from the N-terminus, the 302-residue chain is MHCGPPDMVCETKIVAAEDHEALPGAKKDALLAAAGAMWPPLPAAPGPAAAPPAPPPAPVAQPHGGAGGAGPPGGRGVCIREFRAAEQEAARRIFYDGIMERIPNTAFRGLRQHPRAQLLYALLAALCFAVSRSLLLTCLVPAALLGLRYYYSRKVIRAYLECALHTDMADIEQYYMKPPGSCFWVAVLDGNVVGIVAARAHEEDNTVELLRMSVDSRFRGKGIAKALGRKVLEFAVVHNYSAVVLGTTAVKVAAHKLYESLGFRHMGASDHYVLPGMTLSLAERLFFQVRYHRYRLQLREE.

Residues 46–60 (PGPAAAPPAPPPAPV) show a composition bias toward pro residues. The tract at residues 46 to 72 (PGPAAAPPAPPPAPVAQPHGGAGGAGP) is disordered. The chain crosses the membrane as a helical span at residues 121–141 (YALLAALCFAVSRSLLLTCLV). Positions 143-283 (AALLGLRYYY…VLPGMTLSLA (141 aa)) constitute an N-acetyltransferase domain.

Belongs to the NAT8 family. Expressed in brain.

The protein resides in the cytoplasm. It is found in the microsome membrane. It localises to the mitochondrion membrane. Its subcellular location is the endoplasmic reticulum membrane. The catalysed reaction is L-aspartate + acetyl-CoA = N-acetyl-L-aspartate + CoA + H(+). Aminooxyacetic acid (AOAA) blocks its activity in both cytoplasm and mitochondria. Catalyzes the synthesis of N-acetylaspartate acid (NAA) from L-aspartate and acetyl-CoA. Promotes dopamine uptake by regulating TNF-alpha expression. Attenuates methamphetamine-induced inhibition of dopamine uptake. The chain is N-acetylaspartate synthetase from Homo sapiens (Human).